A 680-amino-acid chain; its full sequence is DNA-directed RNA polymerase subunit beta' (680 aa).

Cys69, Cys71, Cys87, and Cys90 together coordinate Zn(2+). 3 residues coordinate Mg(2+): Asp489, Asp491, and Asp493.

The protein belongs to the RNA polymerase beta' chain family. RpoC1 subfamily. In plastids the minimal PEP RNA polymerase catalytic core is composed of four subunits: alpha, beta, beta', and beta''. When a (nuclear-encoded) sigma factor is associated with the core the holoenzyme is formed, which can initiate transcription. Mg(2+) serves as cofactor. Zn(2+) is required as a cofactor.

It is found in the plastid. The protein resides in the chloroplast. The enzyme catalyses RNA(n) + a ribonucleoside 5'-triphosphate = RNA(n+1) + diphosphate. Functionally, DNA-dependent RNA polymerase catalyzes the transcription of DNA into RNA using the four ribonucleoside triphosphates as substrates. This chain is DNA-directed RNA polymerase subunit beta', found in Capsella bursa-pastoris (Shepherd's purse).